The primary structure comprises 526 residues: Radial spoke head protein 6 homolog A (526 aa).

Disordered regions lie at residues 180–231, 371–411, and 469–526; these read EGED…EENG, VKSE…DAEI, and PPAP…EEDD. 2 stretches are compositionally biased toward acidic residues: residues 181 to 212 and 374 to 395; these read GEDDEAEEGGEEEEKGEVEDDVEEEENEEAED and EEEEDEEEAEEEEKEEENEPEP. Basic and acidic residues predominate over residues 497–506; the sequence is QALKAAKEEA. A compositionally biased stretch (acidic residues) spans 507-526; that stretch reads EAAAEEMEEEEDEEEEEEDD.

This sequence belongs to the flagellar radial spoke RSP4/6 family. Component of sperm axonemal radial spoke complexes.

It is found in the cytoplasm. Its subcellular location is the cytoskeleton. The protein localises to the flagellum axoneme. Functions as part of radial spoke complexes in the axoneme of sperm flagella that play an important part in motility. The triple radial spokes (RS1, RS2 and RS3) are required to modulate beating of the sperm flagellum. The sequence is that of Radial spoke head protein 6 homolog A (rsph6a) from Xenopus tropicalis (Western clawed frog).